The primary structure comprises 554 residues: Dihydroxy-acid dehydratase (554 aa).

A Mg(2+)-binding site is contributed by D78. C119 lines the [2Fe-2S] cluster pocket. D120 and K121 together coordinate Mg(2+). K121 carries the post-translational modification N6-carboxylysine. C192 lines the [2Fe-2S] cluster pocket. E443 provides a ligand contact to Mg(2+). S469 functions as the Proton acceptor in the catalytic mechanism.

Belongs to the IlvD/Edd family. As to quaternary structure, homodimer. [2Fe-2S] cluster is required as a cofactor. The cofactor is Mg(2+).

The enzyme catalyses (2R)-2,3-dihydroxy-3-methylbutanoate = 3-methyl-2-oxobutanoate + H2O. The catalysed reaction is (2R,3R)-2,3-dihydroxy-3-methylpentanoate = (S)-3-methyl-2-oxopentanoate + H2O. Its pathway is amino-acid biosynthesis; L-isoleucine biosynthesis; L-isoleucine from 2-oxobutanoate: step 3/4. It functions in the pathway amino-acid biosynthesis; L-valine biosynthesis; L-valine from pyruvate: step 3/4. Its function is as follows. Functions in the biosynthesis of branched-chain amino acids. Catalyzes the dehydration of (2R,3R)-2,3-dihydroxy-3-methylpentanoate (2,3-dihydroxy-3-methylvalerate) into 2-oxo-3-methylpentanoate (2-oxo-3-methylvalerate) and of (2R)-2,3-dihydroxy-3-methylbutanoate (2,3-dihydroxyisovalerate) into 2-oxo-3-methylbutanoate (2-oxoisovalerate), the penultimate precursor to L-isoleucine and L-valine, respectively. In Shouchella clausii (strain KSM-K16) (Alkalihalobacillus clausii), this protein is Dihydroxy-acid dehydratase.